An 89-amino-acid polypeptide reads, in one-letter code: Small ribosomal subunit protein bS20 (89 aa).

Belongs to the bacterial ribosomal protein bS20 family.

Its function is as follows. Binds directly to 16S ribosomal RNA. In Stenotrophomonas maltophilia (strain R551-3), this protein is Small ribosomal subunit protein bS20.